Here is a 97-residue protein sequence, read N- to C-terminus: Co-chaperonin GroES (97 aa).

It belongs to the GroES chaperonin family. In terms of assembly, heptamer of 7 subunits arranged in a ring. Interacts with the chaperonin GroEL.

The protein localises to the cytoplasm. Functionally, together with the chaperonin GroEL, plays an essential role in assisting protein folding. The GroEL-GroES system forms a nano-cage that allows encapsulation of the non-native substrate proteins and provides a physical environment optimized to promote and accelerate protein folding. GroES binds to the apical surface of the GroEL ring, thereby capping the opening of the GroEL channel. This is Co-chaperonin GroES from Buchnera aphidicola subsp. Geoica urticularia.